The primary structure comprises 436 residues: Serine--tRNA ligase (436 aa).

The segment covering 43 to 55 (TKSEQLKQKRNEV) has biased composition (basic and acidic residues). Residues 43-69 (TKSEQLKQKRNEVSDQIAQAKRNKEDA) form a disordered region. Position 237-239 (237-239 (TAE)) interacts with L-serine. 268 to 270 (RSE) contributes to the ATP binding site. E291 lines the L-serine pocket. 355–358 (EISS) provides a ligand contact to ATP. An L-serine-binding site is contributed by S390.

Belongs to the class-II aminoacyl-tRNA synthetase family. Type-1 seryl-tRNA synthetase subfamily. As to quaternary structure, homodimer. The tRNA molecule binds across the dimer.

Its subcellular location is the cytoplasm. The enzyme catalyses tRNA(Ser) + L-serine + ATP = L-seryl-tRNA(Ser) + AMP + diphosphate + H(+). The catalysed reaction is tRNA(Sec) + L-serine + ATP = L-seryl-tRNA(Sec) + AMP + diphosphate + H(+). It participates in aminoacyl-tRNA biosynthesis; selenocysteinyl-tRNA(Sec) biosynthesis; L-seryl-tRNA(Sec) from L-serine and tRNA(Sec): step 1/1. Catalyzes the attachment of serine to tRNA(Ser). Is also able to aminoacylate tRNA(Sec) with serine, to form the misacylated tRNA L-seryl-tRNA(Sec), which will be further converted into selenocysteinyl-tRNA(Sec). The sequence is that of Serine--tRNA ligase from Lactobacillus gasseri (strain ATCC 33323 / DSM 20243 / BCRC 14619 / CIP 102991 / JCM 1131 / KCTC 3163 / NCIMB 11718 / NCTC 13722 / AM63).